The following is a 339-amino-acid chain: Ketol-acid reductoisomerase (NADP(+)) (339 aa).

Positions 1 to 182 (MKIYYEKDAD…GNTRAGVIET (182 aa)) constitute a KARI N-terminal Rossmann domain. NADP(+)-binding positions include 24–27 (YGSQ), serine 51, serine 53, and 83–86 (DEKQ). Residue histidine 108 is part of the active site. Glycine 134 contacts NADP(+). One can recognise a KARI C-terminal knotted domain in the interval 183–328 (SFREETETDL…EKLRGMMHWA (146 aa)). Residues aspartate 191, glutamate 195, glutamate 227, and glutamate 231 each coordinate Mg(2+). Position 252 (serine 252) interacts with substrate.

Belongs to the ketol-acid reductoisomerase family. Mg(2+) is required as a cofactor.

The enzyme catalyses (2R)-2,3-dihydroxy-3-methylbutanoate + NADP(+) = (2S)-2-acetolactate + NADPH + H(+). It carries out the reaction (2R,3R)-2,3-dihydroxy-3-methylpentanoate + NADP(+) = (S)-2-ethyl-2-hydroxy-3-oxobutanoate + NADPH + H(+). Its pathway is amino-acid biosynthesis; L-isoleucine biosynthesis; L-isoleucine from 2-oxobutanoate: step 2/4. It functions in the pathway amino-acid biosynthesis; L-valine biosynthesis; L-valine from pyruvate: step 2/4. Functionally, involved in the biosynthesis of branched-chain amino acids (BCAA). Catalyzes an alkyl-migration followed by a ketol-acid reduction of (S)-2-acetolactate (S2AL) to yield (R)-2,3-dihydroxy-isovalerate. In the isomerase reaction, S2AL is rearranged via a Mg-dependent methyl migration to produce 3-hydroxy-3-methyl-2-ketobutyrate (HMKB). In the reductase reaction, this 2-ketoacid undergoes a metal-dependent reduction by NADPH to yield (R)-2,3-dihydroxy-isovalerate. This chain is Ketol-acid reductoisomerase (NADP(+)), found in Hyphomonas neptunium (strain ATCC 15444).